A 255-amino-acid chain; its full sequence is Ribosomal RNA large subunit methyltransferase E (255 aa).

The S-adenosyl-L-methionine site is built by Gly-50, Trp-52, Asp-68, Asp-84, and Asp-108. Lys-148 acts as the Proton acceptor in catalysis. In terms of domain architecture, TRAM spans 195-253 (PVRSGEIYDVTVDSVGRTGDGIAMIQGFAVIVKNASPGERLRIKIGPVKQRFAFASILE).

This sequence belongs to the class I-like SAM-binding methyltransferase superfamily. RNA methyltransferase RlmE family.

The protein resides in the cytoplasm. The enzyme catalyses uridine(2552) in 23S rRNA + S-adenosyl-L-methionine = 2'-O-methyluridine(2552) in 23S rRNA + S-adenosyl-L-homocysteine + H(+). Specifically methylates the uridine in position 2552 of 23S rRNA at the 2'-O position of the ribose in the fully assembled 50S ribosomal subunit. The chain is Ribosomal RNA large subunit methyltransferase E from Methanothrix thermoacetophila (strain DSM 6194 / JCM 14653 / NBRC 101360 / PT) (Methanosaeta thermophila).